A 126-amino-acid chain; its full sequence is C-type natriuretic peptide (126 aa).

Residues 1-23 (MHLSQLLACALLLALLSLRPSEA) form the signal peptide. Residues 20–71 (PSEAKPGAPPKVPRTPSGEEVAEPQAAGGGQKKGDKTPGGGGANLKDDRSRL) form a disordered region. A propeptide spanning residues 24 to 73 (KPGAPPKVPRTPSGEEVAEPQAAGGGQKKGDKTPGGGGANLKDDRSRLLR) is cleaved from the precursor. A compositionally biased stretch (gly residues) spans 46 to 62 (AGGGQKKGDKTPGGGGA). Cysteines 110 and 126 form a disulfide.

The protein belongs to the natriuretic peptide family. Degraded by IDE (in vitro).

Its subcellular location is the secreted. Hormone which plays a role in endochondral ossification through regulation of cartilaginous growth plate chondrocytes proliferation and differentiation. May also be vasoactive and natriuretic. Acts by specifically binding and stimulating NPR2 to produce cGMP. Binds the clearance receptor NPR3. The sequence is that of C-type natriuretic peptide (NPPC) from Bos taurus (Bovine).